The following is a 454-amino-acid chain: Arginine biosynthesis bifunctional protein ArgJ, mitochondrial (454 aa).

Positions 184, 213, 224, 311, 449, and 454 each coordinate substrate. The Nucleophile role is filled by Thr-224.

Belongs to the ArgJ family. Heterodimer of an alpha and a beta chain. The alpha and beta chains are autoproteolytically processed from a single precursor protein within the mitochondrion.

Its subcellular location is the mitochondrion matrix. It catalyses the reaction N(2)-acetyl-L-ornithine + L-glutamate = N-acetyl-L-glutamate + L-ornithine. The enzyme catalyses L-glutamate + acetyl-CoA = N-acetyl-L-glutamate + CoA + H(+). Its pathway is amino-acid biosynthesis; L-arginine biosynthesis; L-ornithine and N-acetyl-L-glutamate from L-glutamate and N(2)-acetyl-L-ornithine (cyclic): step 1/1. It functions in the pathway amino-acid biosynthesis; L-arginine biosynthesis; N(2)-acetyl-L-ornithine from L-glutamate: step 1/4. In terms of biological role, catalyzes two activities which are involved in the cyclic version of arginine biosynthesis: the synthesis of acetylglutamate from glutamate and acetyl-CoA, and of ornithine by transacetylation between acetylornithine and glutamate. In Aspergillus clavatus (strain ATCC 1007 / CBS 513.65 / DSM 816 / NCTC 3887 / NRRL 1 / QM 1276 / 107), this protein is Arginine biosynthesis bifunctional protein ArgJ, mitochondrial.